Consider the following 159-residue polypeptide: Transcription elongation factor GreA (159 aa).

This sequence belongs to the GreA/GreB family.

Its function is as follows. Necessary for efficient RNA polymerase transcription elongation past template-encoded arresting sites. The arresting sites in DNA have the property of trapping a certain fraction of elongating RNA polymerases that pass through, resulting in locked ternary complexes. Cleavage of the nascent transcript by cleavage factors such as GreA or GreB allows the resumption of elongation from the new 3'terminus. GreA releases sequences of 2 to 3 nucleotides. This is Transcription elongation factor GreA from Mycoplasmoides gallisepticum (strain R(low / passage 15 / clone 2)) (Mycoplasma gallisepticum).